A 339-amino-acid polypeptide reads, in one-letter code: Dihydroorotate dehydrogenase (quinone) (339 aa).

Residues 62–66 (AGLDK) and threonine 86 each bind FMN. Lysine 66 is a substrate binding site. Substrate is bound at residue 111-115 (NRMGF). The FMN site is built by asparagine 139 and asparagine 172. A substrate-binding site is contributed by asparagine 172. Serine 175 functions as the Nucleophile in the catalytic mechanism. Asparagine 177 contacts substrate. Residues lysine 217 and threonine 245 each coordinate FMN. Substrate is bound at residue 246–247 (NT). FMN-binding positions include glycine 268, glycine 297, and 318–319 (YS).

The protein belongs to the dihydroorotate dehydrogenase family. Type 2 subfamily. As to quaternary structure, monomer. The cofactor is FMN.

It is found in the cell membrane. It catalyses the reaction (S)-dihydroorotate + a quinone = orotate + a quinol. Its pathway is pyrimidine metabolism; UMP biosynthesis via de novo pathway; orotate from (S)-dihydroorotate (quinone route): step 1/1. Its function is as follows. Catalyzes the conversion of dihydroorotate to orotate with quinone as electron acceptor. The polypeptide is Dihydroorotate dehydrogenase (quinone) (Shewanella amazonensis (strain ATCC BAA-1098 / SB2B)).